Consider the following 412-residue polypeptide: Adenylosuccinate synthetase (412 aa).

GTP contacts are provided by residues 12 to 18 (GDEGKGK) and 40 to 42 (GHE). Catalysis depends on aspartate 13, which acts as the Proton acceptor. Mg(2+)-binding residues include aspartate 13 and glycine 40. Residues 13–16 (DEGK), 38–41 (NAGH), arginine 134, asparagine 212, threonine 227, and arginine 291 contribute to the IMP site. Histidine 41 (proton donor) is an active-site residue. Position 287 to 293 (287 to 293 (TSTGRRR)) interacts with substrate. GTP contacts are provided by residues arginine 293, 318 to 320 (KLD), and 400 to 402 (GTG).

The protein belongs to the adenylosuccinate synthetase family. Homodimer. Mg(2+) is required as a cofactor.

It is found in the cytoplasm. The enzyme catalyses IMP + L-aspartate + GTP = N(6)-(1,2-dicarboxyethyl)-AMP + GDP + phosphate + 2 H(+). It functions in the pathway purine metabolism; AMP biosynthesis via de novo pathway; AMP from IMP: step 1/2. Its function is as follows. Plays an important role in the de novo pathway and in the salvage pathway of purine nucleotide biosynthesis. Catalyzes the first committed step in the biosynthesis of AMP from IMP. This chain is Adenylosuccinate synthetase, found in Fusarium vanettenii (strain ATCC MYA-4622 / CBS 123669 / FGSC 9596 / NRRL 45880 / 77-13-4) (Fusarium solani subsp. pisi).